A 477-amino-acid chain; its full sequence is Tyrosine-protein kinase transforming protein Fes (477 aa).

Residues 49–76 (GEPPPVLLLQDDRHSTSSSEQEREGGRT) form a disordered region. Over residues 58–74 (QDDRHSTSSSEQEREGG) the composition is skewed to basic and acidic residues. Positions 115-204 (WYHGALPRAE…KSGIVLNRAV (90 aa)) constitute an SH2 domain. The 262-residue stretch at 216–477 (LVLGEQIGRG…ELQSIRKRHR (262 aa)) folds into the Protein kinase domain. Residues 222–230 (IGRGNFGEV) and Lys-245 each bind ATP. Asp-338 serves as the catalytic Proton acceptor. Tyr-368 is subject to Phosphotyrosine; by autocatalysis.

This sequence belongs to the protein kinase superfamily. Tyr protein kinase family. Fes/fps subfamily.

It catalyses the reaction L-tyrosyl-[protein] + ATP = O-phospho-L-tyrosyl-[protein] + ADP + H(+). The chain is Tyrosine-protein kinase transforming protein Fes (V-FES) from Feline sarcoma virus (strain Snyder-Theilen).